A 470-amino-acid chain; its full sequence is ATP synthase subunit beta (470 aa).

155-162 is an ATP binding site; it reads GGAGVGKT.

It belongs to the ATPase alpha/beta chains family. In terms of assembly, F-type ATPases have 2 components, CF(1) - the catalytic core - and CF(0) - the membrane proton channel. CF(1) has five subunits: alpha(3), beta(3), gamma(1), delta(1), epsilon(1). CF(0) has three main subunits: a(1), b(2) and c(9-12). The alpha and beta chains form an alternating ring which encloses part of the gamma chain. CF(1) is attached to CF(0) by a central stalk formed by the gamma and epsilon chains, while a peripheral stalk is formed by the delta and b chains.

It localises to the cell membrane. The enzyme catalyses ATP + H2O + 4 H(+)(in) = ADP + phosphate + 5 H(+)(out). Produces ATP from ADP in the presence of a proton gradient across the membrane. The catalytic sites are hosted primarily by the beta subunits. The chain is ATP synthase subunit beta from Staphylococcus saprophyticus subsp. saprophyticus (strain ATCC 15305 / DSM 20229 / NCIMB 8711 / NCTC 7292 / S-41).